The primary structure comprises 541 residues: Chaperonin GroEL 2 (541 aa).

ATP-binding positions include 29 to 32 (TLGP), 86 to 90 (DGTTT), Gly-413, 476 to 478 (NAA), and Asp-492.

The protein belongs to the chaperonin (HSP60) family. Forms a cylinder of 14 subunits composed of two heptameric rings stacked back-to-back. Interacts with the co-chaperonin GroES.

Its subcellular location is the secreted. The protein resides in the capsule. The protein localises to the cell surface. It localises to the cell wall. The catalysed reaction is ATP + H2O + a folded polypeptide = ADP + phosphate + an unfolded polypeptide.. In terms of biological role, together with its co-chaperonin GroES, plays an essential role in assisting protein folding. The GroEL-GroES system forms a nano-cage that allows encapsulation of the non-native substrate proteins and provides a physical environment optimized to promote and accelerate protein folding. This chain is Chaperonin GroEL 2, found in Mycobacterium sp. (strain KMS).